Here is a 450-residue protein sequence, read N- to C-terminus: tRNA (guanine-N(7)-)-methyltransferase non-catalytic subunit TRM82 (450 aa).

Residues 69 to 82 (AAKKLKTNEGEAIE) show a composition bias toward basic and acidic residues. The interval 69-103 (AAKKLKTNEGEAIERPGNQRRVPLPGKDPKVPVPG) is disordered. WD repeat units lie at residues 108-147 (PVYQ…KDNC), 200-241 (GHVS…VIDK), and 245-285 (GHKE…LMSS).

Belongs to the WD repeat TRM82 family. In terms of assembly, forms a heterodimer with the catalytic subunit TRM8.

The protein resides in the nucleus. It functions in the pathway tRNA modification; N(7)-methylguanine-tRNA biosynthesis. In terms of biological role, required for the formation of N(7)-methylguanine at position 46 (m7G46) in tRNA. In the complex, it is required to stabilize and induce conformational changes of the catalytic subunit. The protein is tRNA (guanine-N(7)-)-methyltransferase non-catalytic subunit TRM82 of Eremothecium gossypii (strain ATCC 10895 / CBS 109.51 / FGSC 9923 / NRRL Y-1056) (Yeast).